A 653-amino-acid chain; its full sequence is Acetyl-coenzyme A synthetase (653 aa).

CoA contacts are provided by residues 196-199 (RGGK) and Thr315. ATP is bound by residues 391–393 (GEP), 415–420 (DTWWQT), Asp506, and Arg521. Ser529 is a CoA binding site. Arg532 contributes to the ATP binding site. 2 residues coordinate Mg(2+): Val543 and Val548. Position 618 is an N6-acetyllysine (Lys618).

Belongs to the ATP-dependent AMP-binding enzyme family. Mg(2+) serves as cofactor. Acetylated. Deacetylation by the SIR2-homolog deacetylase activates the enzyme.

The enzyme catalyses acetate + ATP + CoA = acetyl-CoA + AMP + diphosphate. Functionally, catalyzes the conversion of acetate into acetyl-CoA (AcCoA), an essential intermediate at the junction of anabolic and catabolic pathways. AcsA undergoes a two-step reaction. In the first half reaction, AcsA combines acetate with ATP to form acetyl-adenylate (AcAMP) intermediate. In the second half reaction, it can then transfer the acetyl group from AcAMP to the sulfhydryl group of CoA, forming the product AcCoA. The protein is Acetyl-coenzyme A synthetase of Laribacter hongkongensis (strain HLHK9).